A 411-amino-acid chain; its full sequence is Protein DDI1 homolog 2 (411 aa).

The Ubiquitin-like domain maps to 1 to 81 (MLLTVFCAPR…LVLRQAERLR (81 aa)). Residues 82-144 (APPQPTVPGL…SGVSPQGLDN (63 aa)) are disordered. The span at 108 to 121 (QNRNRPQQAQRPST) shows a compositional bias: low complexity. Residue aspartate 262 is part of the active site. The Ubiquitin-binding signature appears at 387–406 (DEIADRELAEAIQRSVQDSG).

It belongs to the DDI1 family. In terms of assembly, homodimer.

Its subcellular location is the cytoplasm. It is found in the cytosol. It localises to the chromosome. Functionally, aspartic protease that mediates the cleavage of NFE2L1/NRF1 at 'Leu-104', thereby promoting release of NFE2L1/NRF1 from the endoplasmic reticulum membrane. Ubiquitination of NFE2L1/NRF1 is a prerequisite for cleavage, suggesting that DDI2 specifically recognizes and binds ubiquitinated NFE2L1/NRF1. Seems to act as a proteasomal shuttle which links the proteasome and replication fork proteins like RTF2. Required for cellular survival following replication stress. The protein is Protein DDI1 homolog 2 (ddi2) of Danio rerio (Zebrafish).